A 94-amino-acid chain; its full sequence is Scorpine-like-1 (94 aa).

Residues 1–18 form the signal peptide; it reads MNTKFTVLIFLGVIVVSY. Positions 54 to 94 constitute a BetaSPN-type CS-alpha/beta domain; sequence EYGCMMDISWNKDCQRHCQSTEQKDGICHGMKCKCGKPRSY. 3 disulfides stabilise this stretch: Cys-57–Cys-81, Cys-67–Cys-86, and Cys-71–Cys-88.

Belongs to the long chain scorpion toxin family. Class 3 subfamily. Expressed by the venom gland.

The protein resides in the secreted. Functionally, has antibacterial activity. The chain is Scorpine-like-1 from Urodacus yaschenkoi (Inland robust scorpion).